Reading from the N-terminus, the 320-residue chain is Malate dehydrogenase (320 aa).

NAD(+)-binding positions include 10–15 (GSGMIG) and aspartate 34. Positions 83 and 89 each coordinate substrate. NAD(+) is bound by residues asparagine 96 and 119–121 (ITN). The substrate site is built by asparagine 121 and arginine 152. The Proton acceptor role is filled by histidine 176.

The protein belongs to the LDH/MDH superfamily. MDH type 3 family.

It carries out the reaction (S)-malate + NAD(+) = oxaloacetate + NADH + H(+). Catalyzes the reversible oxidation of malate to oxaloacetate. This chain is Malate dehydrogenase, found in Brucella canis (strain ATCC 23365 / NCTC 10854 / RM-666).